Reading from the N-terminus, the 375-residue chain is Chaperone protein DnaJ (375 aa).

The 66-residue stretch at 5 to 70 (DYYEVLEISR…QKRQAYDRFG (66 aa)) folds into the J domain. The CR-type zinc finger occupies 133–211 (GKEVTIQIPS…CHGHGRVRRN (79 aa)). Zn(2+)-binding residues include C146, C149, C163, C166, C185, C188, C199, and C202. CXXCXGXG motif repeat units follow at residues 146-153 (CEVCRGSG), 163-170 (CATCGGRG), 185-192 (CPQCNGSG), and 199-206 (CTNCHGHG).

The protein belongs to the DnaJ family. Homodimer. Zn(2+) is required as a cofactor.

Its subcellular location is the cytoplasm. Its function is as follows. Participates actively in the response to hyperosmotic and heat shock by preventing the aggregation of stress-denatured proteins and by disaggregating proteins, also in an autonomous, DnaK-independent fashion. Unfolded proteins bind initially to DnaJ; upon interaction with the DnaJ-bound protein, DnaK hydrolyzes its bound ATP, resulting in the formation of a stable complex. GrpE releases ADP from DnaK; ATP binding to DnaK triggers the release of the substrate protein, thus completing the reaction cycle. Several rounds of ATP-dependent interactions between DnaJ, DnaK and GrpE are required for fully efficient folding. Also involved, together with DnaK and GrpE, in the DNA replication of plasmids through activation of initiation proteins. The sequence is that of Chaperone protein DnaJ from Acidithiobacillus ferrooxidans (strain ATCC 23270 / DSM 14882 / CIP 104768 / NCIMB 8455) (Ferrobacillus ferrooxidans (strain ATCC 23270)).